A 495-amino-acid polypeptide reads, in one-letter code: Cysteine--tRNA ligase (495 aa).

Zn(2+) is bound at residue Cys35. A 'HIGH' region motif is present at residues Pro37–Asn47. Residues Cys230, His255, and Glu259 each coordinate Zn(2+). A 'KMSKS' region motif is present at residues Lys287–Ser291. Lys290 is an ATP binding site.

The protein belongs to the class-I aminoacyl-tRNA synthetase family. As to quaternary structure, monomer. It depends on Zn(2+) as a cofactor.

The protein resides in the cytoplasm. It catalyses the reaction tRNA(Cys) + L-cysteine + ATP = L-cysteinyl-tRNA(Cys) + AMP + diphosphate. The sequence is that of Cysteine--tRNA ligase from Flavobacterium psychrophilum (strain ATCC 49511 / DSM 21280 / CIP 103535 / JIP02/86).